The following is a 137-amino-acid chain: Hydrogenase maturation factor HypA (137 aa).

Residue histidine 2 participates in Ni(2+) binding. Zn(2+)-binding residues include cysteine 73, cysteine 75, cysteine 105, and cysteine 108.

The protein belongs to the HypA/HybF family.

Its function is as follows. Involved in the maturation of [NiFe] hydrogenases. Required for nickel insertion into the metal center of the hydrogenase. This Methanosarcina mazei (strain ATCC BAA-159 / DSM 3647 / Goe1 / Go1 / JCM 11833 / OCM 88) (Methanosarcina frisia) protein is Hydrogenase maturation factor HypA.